Consider the following 163-residue polypeptide: NADH-quinone oxidoreductase subunit I (163 aa).

4Fe-4S ferredoxin-type domains are found at residues 53-83 and 94-123; these read LRRY…IEAG and VRYD…EGPN. [4Fe-4S] cluster is bound by residues Cys-63, Cys-66, Cys-69, Cys-73, Cys-103, Cys-106, Cys-109, and Cys-113.

This sequence belongs to the complex I 23 kDa subunit family. In terms of assembly, NDH-1 is composed of 14 different subunits. Subunits NuoA, H, J, K, L, M, N constitute the membrane sector of the complex. Requires [4Fe-4S] cluster as cofactor.

It localises to the cell inner membrane. It catalyses the reaction a quinone + NADH + 5 H(+)(in) = a quinol + NAD(+) + 4 H(+)(out). NDH-1 shuttles electrons from NADH, via FMN and iron-sulfur (Fe-S) centers, to quinones in the respiratory chain. The immediate electron acceptor for the enzyme in this species is believed to be ubiquinone. Couples the redox reaction to proton translocation (for every two electrons transferred, four hydrogen ions are translocated across the cytoplasmic membrane), and thus conserves the redox energy in a proton gradient. The sequence is that of NADH-quinone oxidoreductase subunit I from Chelativorans sp. (strain BNC1).